Consider the following 429-residue polypeptide: Cleavage stimulation factor subunit 50 (429 aa).

The tract at residues 20–41 is hydrophobic; that stretch reads LNALIVAHLRHHNLSQVASAVA. WD repeat units lie at residues 121 to 160, 174 to 213, 218 to 257, 264 to 303, 308 to 347, 351 to 392, and 396 to 429; these read EHKS…QMIS, DHAE…AKRA, QDTH…CFLP, GVSG…CVRS, HGKS…MVKE, AKRV…KVAK, and NHNG…KESV.

As to quaternary structure, homodimer. Belongs to the CSTF complex. Forms a complex with cleavage and polyadenylation specificity factor (CPSF) subunits CSTF64, PABN3, CPSF30, FIPS5 and CPSF100.

It localises to the nucleus. Functionally, one of the multiple factors required for polyadenylation and 3'-end cleavage of pre-mRNAs. May be responsible for the interaction of CSTF with other factors to form a stable complex on the pre-mRNA. The sequence is that of Cleavage stimulation factor subunit 50 from Arabidopsis thaliana (Mouse-ear cress).